The primary structure comprises 308 residues: Porphobilinogen deaminase (308 aa).

Cysteine 241 carries the post-translational modification S-(dipyrrolylmethanemethyl)cysteine.

Belongs to the HMBS family. Monomer. Requires dipyrromethane as cofactor.

It carries out the reaction 4 porphobilinogen + H2O = hydroxymethylbilane + 4 NH4(+). It participates in porphyrin-containing compound metabolism; protoporphyrin-IX biosynthesis; coproporphyrinogen-III from 5-aminolevulinate: step 2/4. Functionally, tetrapolymerization of the monopyrrole PBG into the hydroxymethylbilane pre-uroporphyrinogen in several discrete steps. This Staphylococcus aureus (strain Mu50 / ATCC 700699) protein is Porphobilinogen deaminase.